The sequence spans 541 residues: Chaperonin GroEL 2 (541 aa).

Residues 29 to 32 (TLGP), 86 to 90 (DGTTT), Gly-413, 477 to 479 (NAA), and Asp-493 each bind ATP.

This sequence belongs to the chaperonin (HSP60) family. In terms of assembly, forms a cylinder of 14 subunits composed of two heptameric rings stacked back-to-back. Interacts with the co-chaperonin GroES.

The protein localises to the cytoplasm. The catalysed reaction is ATP + H2O + a folded polypeptide = ADP + phosphate + an unfolded polypeptide.. In terms of biological role, together with its co-chaperonin GroES, plays an essential role in assisting protein folding. The GroEL-GroES system forms a nano-cage that allows encapsulation of the non-native substrate proteins and provides a physical environment optimized to promote and accelerate protein folding. This chain is Chaperonin GroEL 2, found in Nocardioides sp. (strain ATCC BAA-499 / JS614).